The following is a 142-amino-acid chain: Transcription antitermination protein NusB (142 aa).

It belongs to the NusB family.

In terms of biological role, involved in transcription antitermination. Required for transcription of ribosomal RNA (rRNA) genes. Binds specifically to the boxA antiterminator sequence of the ribosomal RNA (rrn) operons. The protein is Transcription antitermination protein NusB of Thermotoga petrophila (strain ATCC BAA-488 / DSM 13995 / JCM 10881 / RKU-1).